The sequence spans 372 residues: Innexin shaking-B (372 aa).

Residues 1–21 (MLDIFRGLKNLVKVSHVKTDS) lie on the Cytoplasmic side of the membrane. Residues 22-42 (IVFRLHYSITVMILMSFSLII) form a helical membrane-spanning segment. Residues 43–110 (TTRQYVGNPI…PADKKHYKYY (68 aa)) lie on the Extracellular side of the membrane. A helical transmembrane segment spans residues 111–131 (QWVCFCLFFQAILFYTPRWLW). Residues 132-182 (KSWEGGKIHALIMDLDIGICSEAEKKQKKKLLLDYLWENLRYHNWWAYRYY) are Cytoplasmic-facing. Residues 183-203 (VCELLALINVIGQMFLMNRFF) form a helical membrane-spanning segment. At 204–267 (DGEFITFGLK…ILPLNVVNEK (64 aa)) the chain is on the extracellular side. A helical transmembrane segment spans residues 268 to 288 (IYIFLWFWFILLTFLTLLTLI). Residues 289 to 372 (YRVVIIFSPR…PGLKGEIQDA (84 aa)) lie on the Cytoplasmic side of the membrane.

Belongs to the pannexin family. In terms of assembly, monomer (isoform Lethal). In terms of tissue distribution, isoform Neural is expressed in synapses of giant fibers (GF), in a large thoracic cell in location of postsynaptic target and optic lobe lamina and medulla. Isoform Lethal is expressed in embryonic mesodermal derivatives. During metamorphosis, both isoforms are dynamically expressed in pupal nervous system.

It is found in the cell membrane. It localises to the cell junction. Its subcellular location is the gap junction. Functionally, structural component of the gap junctions at electrical synapses in distal and mid-depth levels in the lamina. Isoform Lethal forms voltage sensitive intercellular channels through homotypic interactions. The chain is Innexin shaking-B (shakB) from Drosophila melanogaster (Fruit fly).